We begin with the raw amino-acid sequence, 624 residues long: MQEKPTTVAAYAAGASLAAVALFYVFGPNYTIDGDEAGGNRKKSIVGLSNPANDCFINSVLQALAGLGDLRLYLIRELHRRELDGPEIYNQLPGPEEADQLREKRPDRIRELQQGTITRALKEMLDRLNERPIYKKTISARAFIQALEFAYRTRISRNQQDAQEFLQIVAERLSDEYHAGVKARQRAEKSIEFNPYQEREEAPSEIEVRLDDGTENGLPAIIDTKLKEIDNEYGFPFEGKLESQIECQFCHYKYKPNQTSFVNLTLQVPQRSSTTLNACFDGLLKTEYIDDFRCDKCRLLHAIEVKSNALVKAGSATDRQRLEAEIEKIQLALSSDPENALDGVTLPPAELAPKRRIARHMRITVFPKIIAIHLSRSMFDRSGSTKNAAKVAFPERLPLGGILSQKWFKLLAIVCHKGSHNSGHYESFRRNHLYPPYSTPSVFSSYAQSRAASENPSRVASPRLPASSSSTEPPALNISPPASTSTNSPLSLTPDSPSRPPSATDLKSPRPTTSSSRVSFQSTHSSSKQTISPTSAARNSSSLDTARLSSPASRSSLAERNASATDTEASASASLASRIRRRRKTADRWWRISDEKIKECKTSDVLGMQKEVYLLFYEIEKSGS.

Positions 46 to 620 constitute a USP domain; it reads VGLSNPANDC…EVYLLFYEIE (575 aa). The active-site Nucleophile is cysteine 55. Histidine 424 (proton acceptor) is an active-site residue. The tract at residues 453–573 is disordered; it reads SENPSRVASP…ATDTEASASA (121 aa). Low complexity predominate over residues 479–496; that stretch reads SPPASTSTNSPLSLTPDS. A compositionally biased stretch (polar residues) spans 518–544; it reads VSFQSTHSSSKQTISPTSAARNSSSLD. The span at 546–573 shows a compositional bias: low complexity; sequence ARLSSPASRSSLAERNASATDTEASASA.

It belongs to the peptidase C19 family.

It catalyses the reaction Thiol-dependent hydrolysis of ester, thioester, amide, peptide and isopeptide bonds formed by the C-terminal Gly of ubiquitin (a 76-residue protein attached to proteins as an intracellular targeting signal).. The polypeptide is Ubiquitin carboxyl-terminal hydrolase 16 (ubp16) (Emericella nidulans (strain FGSC A4 / ATCC 38163 / CBS 112.46 / NRRL 194 / M139) (Aspergillus nidulans)).